The chain runs to 420 residues: 2',3'-cyclic-nucleotide 3'-phosphodiesterase (420 aa).

The residue at position 9 (Ser9) is a Phosphoserine. Position 110 is a phosphotyrosine (Tyr110). A phosphoserine mark is found at Ser169, Ser227, and Ser239. His250 (proton acceptor) is an active-site residue. Position 252 (Thr252) interacts with substrate. His329 serves as the catalytic Proton donor. Residue Thr331 participates in substrate binding. At Ser358 the chain carries Phosphoserine. Cysteine methyl ester is present on Cys417. Residue Cys417 is the site of S-farnesyl cysteine attachment. The propeptide at 418 to 420 is removed in mature form; it reads TII.

This sequence belongs to the 2H phosphoesterase superfamily. CNPase family. Exists as monomers and homodimers.

It localises to the membrane. Its subcellular location is the melanosome. It catalyses the reaction a nucleoside 2',3'-cyclic phosphate + H2O = a nucleoside 2'-phosphate + H(+). In terms of biological role, catalyzes the formation of 2'-nucleotide products from 2',3'-cyclic substrates. May participate in RNA metabolism in the myelinating cell, CNP is the third most abundant protein in central nervous system myelin. This chain is 2',3'-cyclic-nucleotide 3'-phosphodiesterase, found in Mus musculus (Mouse).